We begin with the raw amino-acid sequence, 158 residues long: Transcription elongation factor GreA (158 aa).

A coiled-coil region spans residues 53-73; sequence EQQSFIEGRIQEIEGKLSNAQ.

This sequence belongs to the GreA/GreB family.

In terms of biological role, necessary for efficient RNA polymerase transcription elongation past template-encoded arresting sites. The arresting sites in DNA have the property of trapping a certain fraction of elongating RNA polymerases that pass through, resulting in locked ternary complexes. Cleavage of the nascent transcript by cleavage factors such as GreA or GreB allows the resumption of elongation from the new 3'terminus. GreA releases sequences of 2 to 3 nucleotides. This chain is Transcription elongation factor GreA, found in Halorhodospira halophila (strain DSM 244 / SL1) (Ectothiorhodospira halophila (strain DSM 244 / SL1)).